The sequence spans 331 residues: Ornithine carbamoyltransferase (331 aa).

Carbamoyl phosphate contacts are provided by residues 57–60, Q82, R106, and 133–136; these read STRT and HPTQ. L-ornithine-binding positions include N166, D230, and 234-235; that span reads SM. Carbamoyl phosphate is bound by residues 272-273 and R317; that span reads CL.

Belongs to the aspartate/ornithine carbamoyltransferase superfamily. OTCase family.

It is found in the cytoplasm. The enzyme catalyses carbamoyl phosphate + L-ornithine = L-citrulline + phosphate + H(+). The protein operates within amino-acid degradation; L-arginine degradation via ADI pathway; carbamoyl phosphate from L-arginine: step 2/2. Reversibly catalyzes the transfer of the carbamoyl group from carbamoyl phosphate (CP) to the N(epsilon) atom of ornithine (ORN) to produce L-citrulline. The chain is Ornithine carbamoyltransferase from Clostridium perfringens (strain SM101 / Type A).